Reading from the N-terminus, the 3814-residue chain is Hybrid PKS-NRPS synthetase pyvA (3814 aa).

The Ketosynthase family 3 (KS3) domain occupies Met-1–Ser-340. Residues Cys-87, His-222, and His-261 each act as for beta-ketoacyl synthase activity in the active site. The interval Val-441–Val-758 is malonyl-CoA:ACP transacylase (MAT) domain. Ser-533 acts as the For malonyltransferase activity in catalysis. The interval His-835–Thr-970 is N-terminal hotdog fold. The tract at residues His-835–Arg-1149 is dehydratase (DH) domain. The PKS/mFAS DH domain occupies His-835–Ala-1151. His-867 serves as the catalytic Proton acceptor; for dehydratase activity. A disordered region spans residues Thr-970–Thr-993. The tract at residues Met-991–Ala-1151 is C-terminal hotdog fold. Asp-1057 functions as the Proton donor; for dehydratase activity in the catalytic mechanism. The enoyl reductase (ER) domain stretch occupies residues Gly-1520–Leu-1836. A ketoreductase (KR) domain region spans residues Thr-1864 to Ile-2036. Positions Ile-2141–Phe-2220 constitute a Carrier 1 domain. Ser-2180 is modified (O-(pantetheine 4'-phosphoryl)serine). The segment covering Gln-2228 to Ser-2238 has biased composition (low complexity). Residues Gln-2228–Ser-2270 form a disordered region. A compositionally biased stretch (polar residues) spans Ala-2239 to Gln-2263. Positions Leu-2273–Glu-2718 are condensation (C) domain 7. The segment at Pro-2738–Ile-3149 is adenylation (A) domain 8. Residues Ser-3257–Asp-3304 form a disordered region. One can recognise a Carrier 2 domain in the interval Asp-3304–Val-3379. Residue Ser-3339 is modified to O-(pantetheine 4'-phosphoryl)serine. Residues Met-3428–Thr-3680 form a thioesterase (TE) domain region.

The protein in the C-terminal section; belongs to the NRP synthetase family.

It participates in secondary metabolite biosynthesis. Its function is as follows. Hybrid PKS-NRPS synthetase; part of the gene cluster that mediates the biosynthesis of pyranoviolin A, a pyranonigrin analog with a C-3 methoxy group. Initially, the PKS portion of pyvA synthesizes C-10 carbon chain from 5 molecules of malonyl-CoA, which is then condensed with the thiolation (T) domain-bound glycine activated by the adenylation (A) domain. The subsequent chain release by Dieckmann condensation (DKC) could be catalyzed by the TE domain present at the C-terminus of pyvA and/or the alpha/beta hydrolase pyvD, installing the tetramic acid moiety. The FAD-dependent monooxygenase pyvC next epoxidizes one of the olefins of the polyketide part, and the epoxide ring-opening induces the dihydro-gamma-pyrone ring formation. The cytochrome P450 monooxygeanse pyvB would be responsible for the 2 consecutive reactions, in which the dihydro-gamma-pyrone is oxidized to gamma-pyrone and C-7 is hydroxylated to yield pyranonigrin F. Finally, the O-methyltransferase pyvH methylates the C-3 hydroxy group to complete the biosynthesis. In Aspergillus violaceofuscus (strain CBS 115571), this protein is Hybrid PKS-NRPS synthetase pyvA.